The sequence spans 536 residues: MATRRQPLIPGWLIPGLCAAALMITVSLAAFLALWLNAPSGAWSTIWRDSYLWHVVRFSFWQAFLSAVLSVVPAVFLARALYRRRFPGRLALLRLCAMTLILPVLVAVFGILSVYGRQGWLASLWQMLGLQWTFSPYGLQGILLAHVFFNLPMASRLLLQSLESIPGEQRQLAAQLGMRGWHFFRFVEWPWLRRQIPPVAALIFMLCFASFATVLSLGGGPQATTIELAIFQALSYDYDPARAAMLALIQMVCCLALVLLSQRLSKAIAPGMTLTQGWRDPDDRLHSRLTDALLIVLALLLLLPPLVAVVVDGVNRSLPEVLAQPILWQAVWTSLRIALAAGVLCVVLTMMLLWSSRELRQRQQLFAGQTLELSGMLILAMPGIVLATGFFLLLNNSVGLPESADGIVIFTNALMAIPYALKVLENPMRDITARYGMLCQSLGIEGWSRLKIVELRALKRPLAQALAFACVLSIGDFGVVALFGNDNFRTLPFYLYQQIGSYRSQDGAVTALILLLLCFTLFTLIEKLPGRHAKTD.

12 helical membrane passes run 16–36 (GLCA…ALWL), 58–78 (FSFW…VFLA), 95–115 (LCAM…LSVY), 134–154 (FSPY…LPMA), 199–219 (VAAL…SLGG), 240–260 (PARA…LVLL), 291–311 (DALL…AVVV), 334–354 (SLRI…MLLW), 373–393 (LSGM…FFLL), 404–424 (ADGI…LKVL), 463–483 (AQAL…VALF), and 506–526 (DGAV…TLIE). The region spanning 56-261 (VRFSFWQAFL…VCCLALVLLS (206 aa)) is the ABC transmembrane type-1 1 domain. An ABC transmembrane type-1 2 domain is found at 331–525 (VWTSLRIALA…LLCFTLFTLI (195 aa)).

Belongs to the binding-protein-dependent transport system permease family. As to quaternary structure, the complex is composed of two ATP-binding proteins (ThiQ), two transmembrane proteins (ThiP) and a solute-binding protein (ThiB).

The protein localises to the cell inner membrane. Part of the ABC transporter complex ThiBPQ involved in thiamine import. Probably responsible for the translocation of the substrate across the membrane. Is also involved in thiamine pyrophosphate transport. The sequence is that of Thiamine transport system permease protein ThiP from Salmonella typhimurium (strain LT2 / SGSC1412 / ATCC 700720).